Reading from the N-terminus, the 698-residue chain is G1/S-specific cyclin CCN1 (698 aa).

A compositionally biased stretch (low complexity) spans 1–11 (MTSLQQQQQQQ). 5 disordered regions span residues 1 to 21 (MTSL…PHHI), 277 to 326 (QKKQ…DDED), 469 to 577 (DEDE…GSIL), 599 to 619 (SNSS…EKRY), and 659 to 698 (NNTN…QYHQ). Polar residues predominate over residues 277–302 (QKKQKKAFSSNSSRTTTASYTHQNQS). 2 stretches are compositionally biased toward acidic residues: residues 310–326 (DEDI…DDED) and 469–480 (DEDENVSTDDEA). 2 stretches are compositionally biased toward polar residues: residues 493-520 (DGNN…NHPQ) and 528-567 (PSAT…SSFA). The segment covering 659-669 (NNTNSSSPLMN) has biased composition (polar residues). Residues 670-690 (QQQQYYHQQQHQQQVTQSSLY) are compositionally biased toward low complexity.

This sequence belongs to the cyclin family.

Functionally, essential for the control of the cell cycle at the G1/S (start) transition. Interacts with the CDC2 protein kinase to form MPF. The polypeptide is G1/S-specific cyclin CCN1 (CCN1) (Candida albicans (strain WO-1) (Yeast)).